A 659-amino-acid polypeptide reads, in one-letter code: MSAVPELRITLAGTERVVAAGTTAGQALEADGRTVIAALVNGEPRDLTHELADGDVVEEIRIDSEEGRAILRHSCAHVLAQAVQELFPEAKLGIGPPIENGFYYDFDVAEPFTPDDLKRIEKRMQEIIKQGQRFSRRAVTDEDARAELADEPYKLELIELKGGAAEAAEGAGVEVGAGQLTIYDNLHPRTGEVCWKDLCRGPHLPDTRAIPAFKLMRTAAAYWRGSEKNPQLQRIYGTAWETKDALKSYLTMLEEAAKRDHRKLGVELDLFSFPDELGSGLAVFHPKGGVVRKVMEEYSRRRHEEAGYQFVNTPHISKAGLFETSGHLPNYADAMFPPIQFEGADYYLKAMNCPMHNLIYRSRGRSYRELPLRLFEFGTVYRYEKSGVVHGLTRARGFTQDDAHIYCTKEQMPDELDRLLTFVLDLLRDYGLSDFYLELSTRDDSPKFIGEPQEWEEATEILRQAAQKQNLELVMDAGGAAYYGPKISVQAKDAIGRTWQMSTIQVDFQQPKRFELEYQAADGSRQRPVMIHRALFGSIERFFAVLLEHYAGAFPAWLAPVQVVGIPIASEHVPYLEDVARRLREHGVRVEVDASDDRMQKKIRNAQKQKIPFMLLAGDNDVSKGAVSFRYRDGSQNNGVPIDKAIEEILTVIRERRQV.

Positions 1–61 constitute a TGS domain; that stretch reads MSAVPELRIT…ADGDVVEEIR (61 aa). Positions 260–555 are catalytic; that stretch reads DHRKLGVELD…LLEHYAGAFP (296 aa). C353, H404, and H532 together coordinate Zn(2+).

Belongs to the class-II aminoacyl-tRNA synthetase family. As to quaternary structure, homodimer. Requires Zn(2+) as cofactor.

It localises to the cytoplasm. The enzyme catalyses tRNA(Thr) + L-threonine + ATP = L-threonyl-tRNA(Thr) + AMP + diphosphate + H(+). Catalyzes the attachment of threonine to tRNA(Thr) in a two-step reaction: L-threonine is first activated by ATP to form Thr-AMP and then transferred to the acceptor end of tRNA(Thr). Also edits incorrectly charged L-seryl-tRNA(Thr). This Thermobifida fusca (strain YX) protein is Threonine--tRNA ligase.